The sequence spans 356 residues: Glycerophosphodiester phosphodiesterase (356 aa).

A signal peptide spans 1-20; sequence MRGTYCVTLWGGVFAALVAG. Cys-21 is lipidated: N-palmitoyl cysteine. Cys-21 carries the S-diacylglycerol cysteine lipid modification. Residues 25–314 enclose the GP-PDE domain; that stretch reads RMIVAYRGAA…CHVHTVRKET (290 aa).

It belongs to the glycerophosphoryl diester phosphodiesterase family. Palmitoylated upon expression of a fusion protein with first 40 residues fused to PhoA in E.coli.

Its subcellular location is the cell inner membrane. It catalyses the reaction a sn-glycero-3-phosphodiester + H2O = an alcohol + sn-glycerol 3-phosphate + H(+). In terms of biological role, glycerophosphoryl diester phosphodiesterase hydrolyzes deacylated phospholipids to G3P and the corresponding alcohols. Functionally, binds human IgA, IgD and the Fc portion of IgG but not IgM, which may contribute to evasion of the human immune system. The chain is Glycerophosphodiester phosphodiesterase (glpQ) from Treponema pallidum (strain Nichols).